A 251-amino-acid chain; its full sequence is Retinoic acid early-inducible protein 1-epsilon (251 aa).

The signal sequence occupies residues 1–28 (MAKAAVTKRHHFMIQKLLILLSYGYTNG). A disulfide bond links Cys37 and Cys56. Residues Asn38, Asn70, Asn83, Asn141, and Asn154 are each glycosylated (N-linked (GlcNAc...) asparagine). The cysteines at positions 88 and 188 are disulfide-linked. Residues 196–228 (LKQSKEKPRSTSRSPSITQLTSTSPLPPPSHST) form a disordered region. Residues 209–219 (SPSITQLTSTS) are compositionally biased toward low complexity. Residue Ser225 is the site of GPI-anchor amidated serine attachment. Positions 226–251 (HSTSKKGFISVGLIFISLLFAFAFAM) are cleaved as a propeptide — removed in mature form.

This sequence belongs to the NKG2D ligand family. In terms of processing, glycosylated.

The protein resides in the cell membrane. Functionally, acts as a ligand for KLRK1. The sequence is that of Retinoic acid early-inducible protein 1-epsilon (Raet1e) from Mus musculus (Mouse).